Here is a 78-residue protein sequence, read N- to C-terminus: Large ribosomal subunit protein bL28 (78 aa).

The segment at 1–28 (MSRRCQVRGTKPEFGNNVSHSQRHTKRR) is disordered.

It belongs to the bacterial ribosomal protein bL28 family.

The protein is Large ribosomal subunit protein bL28 of Cutibacterium acnes (strain DSM 16379 / KPA171202) (Propionibacterium acnes).